The primary structure comprises 215 residues: UPF0323 lipoprotein HP_0232 (215 aa).

The signal sequence occupies residues 1–27 (MKKPYRKISDYAIVGGLSALVMVSIVG). Cysteine 28 is lipidated: N-palmitoyl cysteine. Cysteine 28 carries S-diacylglycerol cysteine lipidation. Over residues 158-169 (QRTYKSPQAYQR) the composition is skewed to polar residues. The segment at 158 to 215 (QRTYKSPQAYQRSQNSFSKSAPSASSMGGASKGQSGFFGSSRPTSSPAVSSGTRGFNS) is disordered. Positions 170–208 (SQNSFSKSAPSASSMGGASKGQSGFFGSSRPTSSPAVSS) are enriched in low complexity.

This sequence belongs to the UPF0323 family.

The protein localises to the cell membrane. The polypeptide is UPF0323 lipoprotein HP_0232 (Helicobacter pylori (strain ATCC 700392 / 26695) (Campylobacter pylori)).